A 366-amino-acid chain; its full sequence is Histidinol-phosphate aminotransferase 1 (366 aa).

K226 carries the post-translational modification N6-(pyridoxal phosphate)lysine.

The protein belongs to the class-II pyridoxal-phosphate-dependent aminotransferase family. Histidinol-phosphate aminotransferase subfamily. As to quaternary structure, homodimer. The cofactor is pyridoxal 5'-phosphate.

The catalysed reaction is L-histidinol phosphate + 2-oxoglutarate = 3-(imidazol-4-yl)-2-oxopropyl phosphate + L-glutamate. The protein operates within amino-acid biosynthesis; L-histidine biosynthesis; L-histidine from 5-phospho-alpha-D-ribose 1-diphosphate: step 7/9. The protein is Histidinol-phosphate aminotransferase 1 of Mannheimia succiniciproducens (strain KCTC 0769BP / MBEL55E).